The primary structure comprises 58 residues: U7-ctenitoxin-Pr1a (58 aa).

6 cysteine pairs are disulfide-bonded: C2–C16, C9–C22, C13–C48, C15–C40, C18–C55, and C24–C38.

Expressed by the venom gland.

It localises to the secreted. In terms of biological role, probable neurotoxin. This chain is U7-ctenitoxin-Pr1a, found in Phoneutria reidyi (Brazilian Amazonian armed spider).